A 190-amino-acid polypeptide reads, in one-letter code: Probable RNA-binding protein 18 (190 aa).

One can recognise an RRM domain in the interval 25–106 (HRLWIGNLDP…KKLVVRWAHA (82 aa)). Residues 166 to 190 (VYSYFKPPDKKRTTPYSRTAWKSRR) are disordered.

The protein is Probable RNA-binding protein 18 (RBM18) of Bos taurus (Bovine).